We begin with the raw amino-acid sequence, 245 residues long: UPF0280 protein UNCMA_16740 (245 aa).

It belongs to the UPF0280 family.

The sequence is that of UPF0280 protein UNCMA_16740 from Methanocella arvoryzae (strain DSM 22066 / NBRC 105507 / MRE50).